Reading from the N-terminus, the 84-residue chain is Small ribosomal subunit protein uS17 (84 aa).

This sequence belongs to the universal ribosomal protein uS17 family. Part of the 30S ribosomal subunit.

Functionally, one of the primary rRNA binding proteins, it binds specifically to the 5'-end of 16S ribosomal RNA. In Shigella boydii serotype 18 (strain CDC 3083-94 / BS512), this protein is Small ribosomal subunit protein uS17.